The primary structure comprises 243 residues: Pyridoxine 5'-phosphate synthase (243 aa).

Residue asparagine 7 coordinates 3-amino-2-oxopropyl phosphate. 1-deoxy-D-xylulose 5-phosphate is bound at residue aspartate 9–histidine 10. Arginine 18 provides a ligand contact to 3-amino-2-oxopropyl phosphate. Histidine 43 (proton acceptor) is an active-site residue. Residues arginine 45 and histidine 50 each contribute to the 1-deoxy-D-xylulose 5-phosphate site. Residue glutamate 70 is the Proton acceptor of the active site. Residue threonine 100 participates in 1-deoxy-D-xylulose 5-phosphate binding. Residue histidine 192 is the Proton donor of the active site. Residues glycine 193 and glycine 215–phenylalanine 216 contribute to the 3-amino-2-oxopropyl phosphate site.

It belongs to the PNP synthase family. In terms of assembly, homooctamer; tetramer of dimers.

The protein localises to the cytoplasm. The enzyme catalyses 3-amino-2-oxopropyl phosphate + 1-deoxy-D-xylulose 5-phosphate = pyridoxine 5'-phosphate + phosphate + 2 H2O + H(+). It functions in the pathway cofactor biosynthesis; pyridoxine 5'-phosphate biosynthesis; pyridoxine 5'-phosphate from D-erythrose 4-phosphate: step 5/5. In terms of biological role, catalyzes the complicated ring closure reaction between the two acyclic compounds 1-deoxy-D-xylulose-5-phosphate (DXP) and 3-amino-2-oxopropyl phosphate (1-amino-acetone-3-phosphate or AAP) to form pyridoxine 5'-phosphate (PNP) and inorganic phosphate. In Salinibacter ruber (strain DSM 13855 / M31), this protein is Pyridoxine 5'-phosphate synthase.